A 677-amino-acid chain; its full sequence is MTQVAKKILVTCALPYANGSIHLGHMLEHIQADVWVRYQRMRGHEVNFICADDAHGTPIMLKAQQLGITPEQMIGEMSQEHQTDFAGFNISYDNYHSTHSEENRQLSELIYSRLKENGFIKNRTISQLYDPEKGMFLPDRFVKGTCPKCKSPDQYGDNCEVCGATYSPTELIEPKSVVSGATPVMRDSEHFFFDLPSFSEMLQAWTRSGALQEQVANKMQEWFESGLQQWDISRDAPYFGFEIPNAPGKYFYVWLDAPIGYMGSFKNLCDKRSDSVSFDEYWKKDSTAELYHFIGKDIVYFHSLFWPAMLEGSNFRKPTNLFVHGYVTVNGAKMSKSRGTFIKASTWLNHFDADSLRYYYTAKLSSRIDDIDLNLEDFVQRVNADIVNKVVNLASRNAGFINKRFDGVLASELADPQLYKTFTDAAEVIGEAWESREFGKAVREIMALADLANRYVDEQAPWVVAKQEGRDADLQAICSMGINLFRVLMTYLKPVLPKLTERAEAFLNTELTWDGIQQPLLGHKVNPFKALYNRIDMKQVEALVEASKEEVKAAAAPVTGPLADDPIQETITFDDFAKVDLRVALIENAEFVEGSDKLLRLTLDLGGEKRNVFSGIRSAYPDPQALIGRHTIMVANLAPRKMRFGISEGMVMAAGPGGKDIFLLSPDAGAKPGHQVK.

The 'HIGH' region motif lies at 15-25; that stretch reads PYANGSIHLGH. Zn(2+)-binding residues include Cys-146, Cys-149, Cys-159, and Cys-162. The 'KMSKS' region signature appears at 333 to 337; the sequence is KMSKS. Lys-336 provides a ligand contact to ATP. Residues 575–677 enclose the tRNA-binding domain; sequence DFAKVDLRVA…AGAKPGHQVK (103 aa).

The protein belongs to the class-I aminoacyl-tRNA synthetase family. MetG type 1 subfamily. Homodimer. Zn(2+) serves as cofactor.

It localises to the cytoplasm. The enzyme catalyses tRNA(Met) + L-methionine + ATP = L-methionyl-tRNA(Met) + AMP + diphosphate. In terms of biological role, is required not only for elongation of protein synthesis but also for the initiation of all mRNA translation through initiator tRNA(fMet) aminoacylation. This chain is Methionine--tRNA ligase, found in Shigella sonnei (strain Ss046).